The chain runs to 234 residues: Sugar fermentation stimulation protein homolog (234 aa).

This sequence belongs to the SfsA family.

The sequence is that of Sugar fermentation stimulation protein homolog from Shewanella sp. (strain MR-7).